The primary structure comprises 360 residues: Alpha-2-macroglobulin receptor-associated protein (360 aa).

A signal peptide spans 1-28 (MAPRRERVSTLPRLQLLVLLLLPLMLVP). Ser53 and Ser138 each carry phosphoserine. A coiled-coil region spans residues 184 to 302 (EKIQEYNVLL…KHNHYQKQLE (119 aa)). An LDL receptor binding region spans residues 240–356 (RLRKVSHQGY…DLSSRVSRAR (117 aa)). N-linked (GlcNAc...) asparagine glycosylation is present at Asn271. Positions 357–360 (HNEL) match the Prevents secretion from ER motif.

It belongs to the alpha-2-MRAP family. Interacts with the LRP1/alpha-2-macroglobulin receptor heavy and light chains; the interaction is transient and coincides with a reduction of ligand binding by the receptor. Interacts with LRP2/glycoprotein 330. Interacts with LRP1B; binding is followed by internalization and degradation. Interacts with LDLR. Interacts with SORL1. Interacts with LRP1; this interaction is followed by rapid internalization. N-glycosylated. In terms of tissue distribution, highly expressed in PYS-2 parietal endoderm cells and in the kidney. The RNA level increased about 10-fold during differentiation of F9 embryonal carcinoma cells to parietal endoderm cells.

The protein localises to the rough endoplasmic reticulum lumen. It localises to the endoplasmic reticulum-Golgi intermediate compartment lumen. It is found in the golgi apparatus. Its subcellular location is the cis-Golgi network. The protein resides in the golgi apparatus lumen. The protein localises to the endosome lumen. It localises to the cell surface. In terms of biological role, molecular chaperone for LDL receptor-related proteins that may regulate their ligand binding activity along the secretory pathway. This chain is Alpha-2-macroglobulin receptor-associated protein (Lrpap1), found in Mus musculus (Mouse).